The sequence spans 217 residues: ATP phosphoribosyltransferase (217 aa).

It belongs to the ATP phosphoribosyltransferase family. Short subfamily. Heteromultimer composed of HisG and HisZ subunits.

The protein resides in the cytoplasm. The catalysed reaction is 1-(5-phospho-beta-D-ribosyl)-ATP + diphosphate = 5-phospho-alpha-D-ribose 1-diphosphate + ATP. Its pathway is amino-acid biosynthesis; L-histidine biosynthesis; L-histidine from 5-phospho-alpha-D-ribose 1-diphosphate: step 1/9. Its function is as follows. Catalyzes the condensation of ATP and 5-phosphoribose 1-diphosphate to form N'-(5'-phosphoribosyl)-ATP (PR-ATP). Has a crucial role in the pathway because the rate of histidine biosynthesis seems to be controlled primarily by regulation of HisG enzymatic activity. The polypeptide is ATP phosphoribosyltransferase (Burkholderia ambifaria (strain MC40-6)).